Consider the following 434-residue polypeptide: Glutamate-1-semialdehyde 2,1-aminomutase (434 aa).

Lys-274 is modified (N6-(pyridoxal phosphate)lysine).

The protein belongs to the class-III pyridoxal-phosphate-dependent aminotransferase family. HemL subfamily. As to quaternary structure, homodimer. It depends on pyridoxal 5'-phosphate as a cofactor.

It localises to the cytoplasm. The enzyme catalyses (S)-4-amino-5-oxopentanoate = 5-aminolevulinate. The protein operates within porphyrin-containing compound metabolism; protoporphyrin-IX biosynthesis; 5-aminolevulinate from L-glutamyl-tRNA(Glu): step 2/2. The polypeptide is Glutamate-1-semialdehyde 2,1-aminomutase (Acidovorax ebreus (strain TPSY) (Diaphorobacter sp. (strain TPSY))).